Reading from the N-terminus, the 212-residue chain is Large ribosomal subunit protein uL3 (212 aa).

The tract at residues 127 to 153 (FRGGPATHGQSDRHRAPGSIGSGTTPG) is disordered.

This sequence belongs to the universal ribosomal protein uL3 family. Part of the 50S ribosomal subunit. Forms a cluster with proteins L14 and L19.

In terms of biological role, one of the primary rRNA binding proteins, it binds directly near the 3'-end of the 23S rRNA, where it nucleates assembly of the 50S subunit. In Herpetosiphon aurantiacus (strain ATCC 23779 / DSM 785 / 114-95), this protein is Large ribosomal subunit protein uL3.